The following is a 147-amino-acid chain: Transcriptional repressor NrdR (147 aa).

The segment at 3–34 (CPFCGHLETQVVETRVSEDADFVRRRRQCSAC) is a zinc-finger region. Residues 49–139 (PVVVKKDGSR…VYRSFEDVDE (91 aa)) form the ATP-cone domain.

This sequence belongs to the NrdR family. It depends on Zn(2+) as a cofactor.

Its function is as follows. Negatively regulates transcription of bacterial ribonucleotide reductase nrd genes and operons by binding to NrdR-boxes. The chain is Transcriptional repressor NrdR from Variovorax paradoxus (strain S110).